Here is a 347-residue protein sequence, read N- to C-terminus: NADH-quinone oxidoreductase subunit H (347 aa).

9 helical membrane-spanning segments follow: residues 13–33, 50–70, 82–102, 115–135, 161–181, 198–218, 263–283, 286–306, and 321–341; these read IIMI…IAYV, PNVV…KFVF, AVFL…WAVV, VGIL…IMGG, IGFV…TDIV, FLDW…ISAL, CALT…IWIL, VPGI…FAMV, and LGWK…AFVL.

It belongs to the complex I subunit 1 family. NDH-1 is composed of 14 different subunits. Subunits NuoA, H, J, K, L, M, N constitute the membrane sector of the complex.

It is found in the cell inner membrane. It catalyses the reaction a quinone + NADH + 5 H(+)(in) = a quinol + NAD(+) + 4 H(+)(out). Functionally, NDH-1 shuttles electrons from NADH, via FMN and iron-sulfur (Fe-S) centers, to quinones in the respiratory chain. The immediate electron acceptor for the enzyme in this species is believed to be ubiquinone. Couples the redox reaction to proton translocation (for every two electrons transferred, four hydrogen ions are translocated across the cytoplasmic membrane), and thus conserves the redox energy in a proton gradient. This subunit may bind ubiquinone. The chain is NADH-quinone oxidoreductase subunit H from Rhizobium johnstonii (strain DSM 114642 / LMG 32736 / 3841) (Rhizobium leguminosarum bv. viciae).